The chain runs to 132 residues: Arginine decarboxylase proenzyme (132 aa).

Ser-70 (schiff-base intermediate with substrate; via pyruvic acid) is an active-site residue. Ser-70 is modified (pyruvic acid (Ser); by autocatalysis). His-75 functions as the Proton acceptor; for processing activity in the catalytic mechanism. The active-site Proton donor; for catalytic activity is the Cys-90.

It belongs to the prokaryotic AdoMetDC family. Type 1 subfamily. Heterooctamer of four alpha and four beta chains arranged as a tetramer of alpha/beta heterodimers. Pyruvate is required as a cofactor. Post-translationally, is synthesized initially as an inactive proenzyme. Formation of the active enzyme involves a self-maturation process in which the active site pyruvoyl group is generated from an internal serine residue via an autocatalytic post-translational modification. Two non-identical subunits are generated from the proenzyme in this reaction, and the pyruvate is formed at the N-terminus of the alpha chain, which is derived from the carboxyl end of the proenzyme. The post-translation cleavage follows an unusual pathway, termed non-hydrolytic serinolysis, in which the side chain hydroxyl group of the serine supplies its oxygen atom to form the C-terminus of the beta chain, while the remainder of the serine residue undergoes an oxidative deamination to produce ammonia and the pyruvoyl group blocking the N-terminus of the alpha chain.

It catalyses the reaction L-arginine + H(+) = agmatine + CO2. Its pathway is amine and polyamine biosynthesis; agmatine biosynthesis; agmatine from L-arginine: step 1/1. In terms of biological role, specifically catalyzes the decarboxylation of L-arginine to agmatine. Has no S-adenosylmethionine decarboxylase (AdoMetDC) activity. The protein is Arginine decarboxylase proenzyme of Aeropyrum pernix (strain ATCC 700893 / DSM 11879 / JCM 9820 / NBRC 100138 / K1).